A 375-amino-acid chain; its full sequence is Queuine tRNA-ribosyltransferase (375 aa).

Residue Asp90 is the Proton acceptor of the active site. Residues 90-94, Asp144, Gln193, and Gly220 each bind substrate; that span reads DSGGF. The segment at 251-257 is RNA binding; sequence GVGTPED. The Nucleophile role is filled by Asp270. The segment at 275 to 279 is RNA binding; important for wobble base 34 recognition; sequence TRNAR. 4 residues coordinate Zn(2+): Cys308, Cys310, Cys313, and His339.

This sequence belongs to the queuine tRNA-ribosyltransferase family. In terms of assembly, homodimer. Within each dimer, one monomer is responsible for RNA recognition and catalysis, while the other monomer binds to the replacement base PreQ1. The cofactor is Zn(2+).

It carries out the reaction 7-aminomethyl-7-carbaguanine + guanosine(34) in tRNA = 7-aminomethyl-7-carbaguanosine(34) in tRNA + guanine. Its pathway is tRNA modification; tRNA-queuosine biosynthesis. Functionally, catalyzes the base-exchange of a guanine (G) residue with the queuine precursor 7-aminomethyl-7-deazaguanine (PreQ1) at position 34 (anticodon wobble position) in tRNAs with GU(N) anticodons (tRNA-Asp, -Asn, -His and -Tyr). Catalysis occurs through a double-displacement mechanism. The nucleophile active site attacks the C1' of nucleotide 34 to detach the guanine base from the RNA, forming a covalent enzyme-RNA intermediate. The proton acceptor active site deprotonates the incoming PreQ1, allowing a nucleophilic attack on the C1' of the ribose to form the product. After dissociation, two additional enzymatic reactions on the tRNA convert PreQ1 to queuine (Q), resulting in the hypermodified nucleoside queuosine (7-(((4,5-cis-dihydroxy-2-cyclopenten-1-yl)amino)methyl)-7-deazaguanosine). In Herminiimonas arsenicoxydans, this protein is Queuine tRNA-ribosyltransferase.